A 216-amino-acid chain; its full sequence is Regulatory protein RecX (216 aa).

Belongs to the RecX family.

It is found in the cytoplasm. Functionally, modulates RecA activity. The chain is Regulatory protein RecX from Clostridium tetani (strain Massachusetts / E88).